The following is a 419-amino-acid chain: Appendage-associated protein (419 aa).

Positions 1 to 39 are cleaved as a signal peptide; that stretch reads MIVTYGTVGCPVSRGGSPGCGRRIAEELRLAEDARLRLA. Positions 232 to 262 form a coiled coil; it reads ERQKAQRRREERAAKAREELRKELNDIDAKW.

It is found in the secreted. In terms of biological role, associates with actin filament appendages that are formed in the inclusion appendages of the parasitophorous vacuole during infection of the host erythrocyte. The polypeptide is Appendage-associated protein (Anaplasma marginale (strain St. Maries)).